Consider the following 1225-residue polypeptide: uncharacterized protein (1225 aa).

A compositionally biased stretch (polar residues) spans 1-15; it reads MSSQAEPSKGASNAD. The tract at residues 1-104 is disordered; it reads MSSQAEPSKG…VDGVPTRPVS (104 aa). A compositionally biased stretch (basic and acidic residues) spans 16 to 25; it reads PNEKVEKMHL. The span at 43-65 shows a compositional bias: polar residues; it reads ASPSDKNNLNPQSAGVSEVQVQD. A helical transmembrane segment spans residues 167–187; that stretch reads FLFGYLRFGFLSLFIIMAVCI. In terms of domain architecture, SMP-LTD spans 217–422; that stretch reads DSETVTWLNT…SPNVYELDIE (206 aa). C2 domains follow at residues 413-534, 559-668, and 685-803; these read SPNV…NDAF, DSGE…LLWF, and KPAQ…GALM. A Phosphoserine modification is found at serine 843. The segment at 867-890 is disordered; it reads PESQKTPTAVDNTSTSRGSTSVKT. Positions 869–890 are enriched in polar residues; the sequence is SQKTPTAVDNTSTSRGSTSVKT. The region spanning 1019 to 1137 is the C2 4 domain; the sequence is RLTPVPVKLE…QQQQQTNYEI (119 aa). Positions 1053, 1059, 1107, 1109, and 1115 each coordinate Ca(2+).

It depends on Ca(2+) as a cofactor.

The protein localises to the endoplasmic reticulum membrane. This is an uncharacterized protein from Schizosaccharomyces pombe (strain 972 / ATCC 24843) (Fission yeast).